The chain runs to 75 residues: Ribonuclease pancreatic (75 aa).

Disulfide bonds link cysteine 7-cysteine 65 and cysteine 46-cysteine 53. Asparagine 15 carries an N-linked (GlcNAc...) asparagine glycan. Substrate-binding positions include 22-26 (KPVNT), lysine 47, and arginine 66.

It belongs to the pancreatic ribonuclease family. In terms of assembly, monomer. Interacts with and forms tight 1:1 complexes with RNH1. Dimerization of two such complexes may occur. Interaction with RNH1 inhibits this protein. Pancreas.

It is found in the secreted. The catalysed reaction is an [RNA] containing cytidine + H2O = an [RNA]-3'-cytidine-3'-phosphate + a 5'-hydroxy-ribonucleotide-3'-[RNA].. It carries out the reaction an [RNA] containing uridine + H2O = an [RNA]-3'-uridine-3'-phosphate + a 5'-hydroxy-ribonucleotide-3'-[RNA].. In terms of biological role, endonuclease that catalyzes the cleavage of RNA on the 3' side of pyrimidine nucleotides. Acts on single-stranded and double-stranded RNA. In Oryx leucoryx (Arabian oryx), this protein is Ribonuclease pancreatic (rnase1).